The primary structure comprises 489 residues: Acetyl-coenzyme A carboxylase carboxyl transferase subunit beta, chloroplastic (489 aa).

The 265-residue stretch at 225-489 (LWIQCDNCYG…FFPLNKNEIK (265 aa)) folds into the CoA carboxyltransferase N-terminal domain. Zn(2+)-binding residues include Cys-229, Cys-232, Cys-245, and Cys-248. A C4-type zinc finger spans residues 229 to 248 (CDNCYGLKYKKVEMNVCEEC).

This sequence belongs to the AccD/PCCB family. As to quaternary structure, acetyl-CoA carboxylase is a heterohexamer composed of biotin carboxyl carrier protein, biotin carboxylase and 2 subunits each of ACCase subunit alpha and ACCase plastid-coded subunit beta (accD). Zn(2+) is required as a cofactor.

The protein resides in the plastid. It localises to the chloroplast stroma. It catalyses the reaction N(6)-carboxybiotinyl-L-lysyl-[protein] + acetyl-CoA = N(6)-biotinyl-L-lysyl-[protein] + malonyl-CoA. It functions in the pathway lipid metabolism; malonyl-CoA biosynthesis; malonyl-CoA from acetyl-CoA: step 1/1. Its function is as follows. Component of the acetyl coenzyme A carboxylase (ACC) complex. Biotin carboxylase (BC) catalyzes the carboxylation of biotin on its carrier protein (BCCP) and then the CO(2) group is transferred by the transcarboxylase to acetyl-CoA to form malonyl-CoA. In Brassica napus (Rape), this protein is Acetyl-coenzyme A carboxylase carboxyl transferase subunit beta, chloroplastic.